A 453-amino-acid chain; its full sequence is Tryptophan biosynthesis protein TrpCF (453 aa).

Positions 1–257 are indole-3-glycerol phosphate synthase; that stretch reads MMQTVLAKIV…AAVRRVLLGE (257 aa). The tract at residues 258–453 is N-(5'-phosphoribosyl)anthranilate isomerase; it reads NKVCGLTRGQ…ASVFQTLRAY (196 aa).

The protein in the N-terminal section; belongs to the TrpC family. It in the C-terminal section; belongs to the TrpF family. As to quaternary structure, monomer.

The enzyme catalyses N-(5-phospho-beta-D-ribosyl)anthranilate = 1-(2-carboxyphenylamino)-1-deoxy-D-ribulose 5-phosphate. It catalyses the reaction 1-(2-carboxyphenylamino)-1-deoxy-D-ribulose 5-phosphate + H(+) = (1S,2R)-1-C-(indol-3-yl)glycerol 3-phosphate + CO2 + H2O. Its pathway is amino-acid biosynthesis; L-tryptophan biosynthesis; L-tryptophan from chorismate: step 3/5. It functions in the pathway amino-acid biosynthesis; L-tryptophan biosynthesis; L-tryptophan from chorismate: step 4/5. Functionally, bifunctional enzyme that catalyzes two sequential steps of tryptophan biosynthetic pathway. The first reaction is catalyzed by the isomerase, coded by the TrpF domain; the second reaction is catalyzed by the synthase, coded by the TrpC domain. The protein is Tryptophan biosynthesis protein TrpCF (trpC) of Escherichia coli O157:H7.